A 233-amino-acid chain; its full sequence is ATP synthase subunit a, chloroplastic (233 aa).

4 helical membrane-spanning segments follow: residues 27-47, 84-104, 122-142, and 192-212; these read VLLI…LGTL, VPFV…GALI, DINT…YAGF, and VLCL…GIFA.

Belongs to the ATPase A chain family. F-type ATPases have 2 components, CF(1) - the catalytic core - and CF(0) - the membrane proton channel. CF(1) has five subunits: alpha(3), beta(3), gamma(1), delta(1), epsilon(1). CF(0) has four main subunits: a, b, b' and c.

The protein resides in the plastid. Its subcellular location is the chloroplast thylakoid membrane. Key component of the proton channel; it plays a direct role in the translocation of protons across the membrane. This is ATP synthase subunit a, chloroplastic from Ochrosphaera neapolitana.